The primary structure comprises 493 residues: NAD(P)H-quinone oxidoreductase chain 4, chloroplastic (493 aa).

Helical transmembrane passes span F4–L24, W34–Y54, M87–I107, P111–S131, L134–L154, F167–F187, I212–T232, H242–I262, F276–L296, M313–C333, Q334–D354, S385–I405, F417–L437, and V462–L482.

This sequence belongs to the complex I subunit 4 family.

The protein localises to the plastid. The protein resides in the chloroplast thylakoid membrane. The enzyme catalyses a plastoquinone + NADH + (n+1) H(+)(in) = a plastoquinol + NAD(+) + n H(+)(out). It catalyses the reaction a plastoquinone + NADPH + (n+1) H(+)(in) = a plastoquinol + NADP(+) + n H(+)(out). This Chara vulgaris (Common stonewort) protein is NAD(P)H-quinone oxidoreductase chain 4, chloroplastic.